A 157-amino-acid polypeptide reads, in one-letter code: SsrA-binding protein (157 aa).

It belongs to the SmpB family.

It localises to the cytoplasm. Functionally, required for rescue of stalled ribosomes mediated by trans-translation. Binds to transfer-messenger RNA (tmRNA), required for stable association of tmRNA with ribosomes. tmRNA and SmpB together mimic tRNA shape, replacing the anticodon stem-loop with SmpB. tmRNA is encoded by the ssrA gene; the 2 termini fold to resemble tRNA(Ala) and it encodes a 'tag peptide', a short internal open reading frame. During trans-translation Ala-aminoacylated tmRNA acts like a tRNA, entering the A-site of stalled ribosomes, displacing the stalled mRNA. The ribosome then switches to translate the ORF on the tmRNA; the nascent peptide is terminated with the 'tag peptide' encoded by the tmRNA and targeted for degradation. The ribosome is freed to recommence translation, which seems to be the essential function of trans-translation. The protein is SsrA-binding protein of Syntrophomonas wolfei subsp. wolfei (strain DSM 2245B / Goettingen).